Consider the following 692-residue polypeptide: Elongation factor G (692 aa).

Residues 8 to 282 (EKTRNIGIMA…AVLDYLPAPT (275 aa)) form the tr-type G domain. GTP is bound by residues 17–24 (AHIDAGKT), 81–85 (DTPGH), and 135–138 (NKMD). A phosphoserine mark is found at serine 213, serine 302, serine 569, and serine 680.

It belongs to the TRAFAC class translation factor GTPase superfamily. Classic translation factor GTPase family. EF-G/EF-2 subfamily. In terms of processing, phosphorylated on threonine residue(s). Phosphorylated by PrkC and dephosphorylated by PrpC, in vitro.

It is found in the cytoplasm. In terms of biological role, catalyzes the GTP-dependent ribosomal translocation step during translation elongation. During this step, the ribosome changes from the pre-translocational (PRE) to the post-translocational (POST) state as the newly formed A-site-bound peptidyl-tRNA and P-site-bound deacylated tRNA move to the P and E sites, respectively. Catalyzes the coordinated movement of the two tRNA molecules, the mRNA and conformational changes in the ribosome. This Bacillus subtilis (strain 168) protein is Elongation factor G (fusA).